Here is a 664-residue protein sequence, read N- to C-terminus: Transketolase 1 (664 aa).

H26 provides a ligand contact to substrate. Residues H66 and 114 to 116 (GPL) each bind thiamine diphosphate. A Mg(2+)-binding site is contributed by D155. The thiamine diphosphate site is built by G156 and N185. The Mg(2+) site is built by N185 and I187. Substrate is bound by residues H260, R357, and S384. H260 provides a ligand contact to thiamine diphosphate. E411 functions as the Proton donor in the catalytic mechanism. A thiamine diphosphate-binding site is contributed by F437. 3 residues coordinate substrate: H461, D469, and R520.

It belongs to the transketolase family. Homodimer. Requires Mg(2+) as cofactor. It depends on Ca(2+) as a cofactor. The cofactor is Mn(2+). Co(2+) is required as a cofactor. Thiamine diphosphate serves as cofactor.

The enzyme catalyses D-sedoheptulose 7-phosphate + D-glyceraldehyde 3-phosphate = aldehydo-D-ribose 5-phosphate + D-xylulose 5-phosphate. Catalyzes the transfer of a two-carbon ketol group from a ketose donor to an aldose acceptor, via a covalent intermediate with the cofactor thiamine pyrophosphate. The polypeptide is Transketolase 1 (tkt1) (Vibrio vulnificus (strain CMCP6)).